A 451-amino-acid chain; its full sequence is Tubulin alpha chain (451 aa).

Glutamine 11 lines the GTP pocket. Lysine 40 carries the post-translational modification N6-acetyllysine. 7 residues coordinate GTP: glutamate 71, serine 140, glycine 144, threonine 145, threonine 179, asparagine 206, and asparagine 228. Glutamate 71 provides a ligand contact to Mg(2+). Glutamate 254 is a catalytic residue.

The protein belongs to the tubulin family. Dimer of alpha and beta chains. A typical microtubule is a hollow water-filled tube with an outer diameter of 25 nm and an inner diameter of 15 nM. Alpha-beta heterodimers associate head-to-tail to form protofilaments running lengthwise along the microtubule wall with the beta-tubulin subunit facing the microtubule plus end conferring a structural polarity. Microtubules usually have 13 protofilaments but different protofilament numbers can be found in some organisms and specialized cells. Mg(2+) serves as cofactor. In terms of processing, undergoes a tyrosination/detyrosination cycle, the cyclic removal and re-addition of a C-terminal tyrosine residue by the enzymes tubulin tyrosine carboxypeptidase (TTCP) and tubulin tyrosine ligase (TTL), respectively. Post-translationally, acetylation of alpha chains at Lys-40 stabilizes microtubules and affects affinity and processivity of microtubule motors. This modification has a role in multiple cellular functions, ranging from cell motility, cell cycle progression or cell differentiation to intracellular trafficking and signaling. In terms of tissue distribution, actively expressed in the lens but does not seem to be lens-specific.

The protein localises to the cytoplasm. It is found in the cytoskeleton. It catalyses the reaction GTP + H2O = GDP + phosphate + H(+). In terms of biological role, tubulin is the major constituent of microtubules, a cylinder consisting of laterally associated linear protofilaments composed of alpha- and beta-tubulin heterodimers. Microtubules grow by the addition of GTP-tubulin dimers to the microtubule end, where a stabilizing cap forms. Below the cap, tubulin dimers are in GDP-bound state, owing to GTPase activity of alpha-tubulin. This Enteroctopus dofleini (North Pacific giant octopus) protein is Tubulin alpha chain.